Reading from the N-terminus, the 672-residue chain is Transmembrane 9 superfamily member 2 (672 aa).

An N-terminal signal peptide occupies residues 1-18 (MKRGVWLLIYCYATLTKG). The Extracellular portion of the chain corresponds to 19 to 307 (FSLPGLSPTT…DKYLHIYDPQ (289 aa)). Residues 308 to 328 (IQWFSLINFSVIVILLSSVVM) form a helical membrane-spanning segment. Residues 329–383 (HSLLRALKSDLARYNELNLDNEFHEDSGWKLGHGDVFRTPSKSMLLSILVGSGMQ) are Cytoplasmic-facing. A helical transmembrane segment spans residues 384-404 (LFLMVMCSIFFAAVGLVSPVS). Topologically, residues 405 to 410 (RGSLPT) are extracellular. A helical transmembrane segment spans residues 411-431 (VMFVLYALFGFVGSYASMGVY). Residues 432-447 (KFFRGPYWKANMILTP) are Cytoplasmic-facing. A helical membrane pass occupies residues 448–468 (ILLPGAIFLLIVIMNFFLLFA). Residues 469 to 479 (HSSGVIPARSL) are Extracellular-facing. Residues 480-500 (FFIILLWFLVSVPLSFAGSIV) form a helical membrane-spanning segment. Topologically, residues 501–532 (AHKQCNWDEHPTKTNQIARQIPYQPWYLRTAQ) are cytoplasmic. The helical transmembrane segment at 533-553 (ATLIAGIFSFGSIAVELYFIY) threads the bilayer. Over 554-565 (SSLWFNKIFYMF) the chain is Extracellular. A helical membrane pass occupies residues 566-586 (GFLLFSFLLLTLTTSLVTILI). The Cytoplasmic segment spans residues 587-601 (TYYSLCLENWLWQWR). A helical membrane pass occupies residues 602 to 622 (SFIIGGLGCSIYTFIHSILFT). Residues 623-628 (KFKLGG) are Extracellular-facing. The chain crosses the membrane as a helical span at residues 629-649 (VITVVLYLGYSLIISALCCVV). The Cytoplasmic segment spans residues 650 to 672 (TGAIGFFSSMFFIRKIYSAIKVE).

The protein belongs to the nonaspanin (TM9SF) (TC 9.A.2) family.

It is found in the vacuole membrane. With EMP70 and TMN3, plays a critical role in the late stages of a nutrient-controlled pathway notably regulating FLO11 gene expression. Acts downstream of RAS2 and TOR. Essential for cell adhesion and filamentous growth. May play a role as effector of cellular copper homeostasis. In Saccharomyces cerevisiae (strain ATCC 204508 / S288c) (Baker's yeast), this protein is Transmembrane 9 superfamily member 2 (TMN2).